Reading from the N-terminus, the 1412-residue chain is DNA-directed RNA polymerase subunit beta' (1412 aa).

Asp-543, Asp-545, and Asp-547 together coordinate Mg(2+). Positions 1017, 1092, 1099, and 1102 each coordinate Zn(2+).

This sequence belongs to the RNA polymerase beta' chain family. The RNAP catalytic core consists of 2 alpha, 1 beta, 1 beta' and 1 omega subunit. When a sigma factor is associated with the core the holoenzyme is formed, which can initiate transcription. Mg(2+) serves as cofactor. Requires Zn(2+) as cofactor.

The catalysed reaction is RNA(n) + a ribonucleoside 5'-triphosphate = RNA(n+1) + diphosphate. DNA-dependent RNA polymerase catalyzes the transcription of DNA into RNA using the four ribonucleoside triphosphates as substrates. The chain is DNA-directed RNA polymerase subunit beta' from Mesomycoplasma hyopneumoniae (strain 232) (Mycoplasma hyopneumoniae).